The sequence spans 469 residues: Cytochrome P450 85A1 (469 aa).

The chain crosses the membrane as a helical span at residues 1–21 (MVLVAIGVVVAAAVVVSSLLL). Residue Cys419 coordinates heme.

It belongs to the cytochrome P450 family. Heme is required as a cofactor. Expressed at low levels in all the tissues, but preferentially in the leaf sheath.

It localises to the membrane. It catalyses the reaction 6-deoxoteasterone + reduced [NADPH--hemoprotein reductase] + O2 = 6alpha-hydroxyteasterone + oxidized [NADPH--hemoprotein reductase] + H2O + H(+). It carries out the reaction 6alpha-hydroxytyphasterol + reduced [NADPH--hemoprotein reductase] + O2 = teasterone + oxidized [NADPH--hemoprotein reductase] + 2 H2O + H(+). The enzyme catalyses 3-dehydro-6-deoxoteasterone + reduced [NADPH--hemoprotein reductase] + O2 = 3-dehydro-6alpha-hydroxyteasterone + oxidized [NADPH--hemoprotein reductase] + H2O + H(+). The catalysed reaction is 3-dehydro-6alpha-hydroxyteasterone + reduced [NADPH--hemoprotein reductase] + O2 = 3-dehydroteasterone + oxidized [NADPH--hemoprotein reductase] + 2 H2O + H(+). It catalyses the reaction 6-deoxotyphasterol + reduced [NADPH--hemoprotein reductase] + O2 = 6alpha-hydroxytyphasterol + oxidized [NADPH--hemoprotein reductase] + H2O + H(+). It carries out the reaction 6alpha-hydroxytyphasterol + reduced [NADPH--hemoprotein reductase] + O2 = typhasterol + oxidized [NADPH--hemoprotein reductase] + 2 H2O + H(+). The enzyme catalyses 3-dehydro-6-deoxoteasterone + 2 reduced [NADPH--hemoprotein reductase] + 2 O2 = 3-dehydroteasterone + 2 oxidized [NADPH--hemoprotein reductase] + 3 H2O + 2 H(+). The catalysed reaction is 6-deoxoteasterone + 2 reduced [NADPH--hemoprotein reductase] + 2 O2 = teasterone + 2 oxidized [NADPH--hemoprotein reductase] + 3 H2O + 2 H(+). It catalyses the reaction 6-deoxotyphasterol + 2 reduced [NADPH--hemoprotein reductase] + 2 O2 = typhasterol + 2 oxidized [NADPH--hemoprotein reductase] + 3 H2O + 2 H(+). It functions in the pathway plant hormone biosynthesis; brassinosteroid biosynthesis. Its function is as follows. Catalyzes the C6-oxidation step in brassinosteroids biosynthesis. May convert 6-deoxoteasterone (6-deoxoTE) to teasterone (TE), 3-dehydro-6-deoxoteasterone (6-deoxo3DT, 6-deoxo3DHT) to 3-dehydroteasterone (3DT, 3-DHT), and 6-deoxotyphasterol (6-deoxoTY) to typhasterol (TY). Involved in the organization and elongation of the leaf and stem cells. Not able to convert 6-deoxocastasterone (6-deoxoCS) and castasterone (CS) to brassinolide (BL). The chain is Cytochrome P450 85A1 from Oryza sativa subsp. japonica (Rice).